The following is a 241-amino-acid chain: Chromosome partition protein MukE (241 aa).

The tract at residues 207–241 (DGEAATPDSLSQEKSAVKNDEEIEDELDEGLGEEE) is disordered. Acidic residues predominate over residues 227–241 (EEIEDELDEGLGEEE).

The protein belongs to the MukE family. Interacts, and probably forms a ternary complex, with MukF and MukB. The complex formation is stimulated by calcium or magnesium.

The protein resides in the cytoplasm. The protein localises to the nucleoid. Functionally, involved in chromosome condensation, segregation and cell cycle progression. May participate in facilitating chromosome segregation by condensation DNA from both sides of a centrally located replisome during cell division. Probably acts via its interaction with MukB and MukF. The chain is Chromosome partition protein MukE from Mannheimia succiniciproducens (strain KCTC 0769BP / MBEL55E).